The following is a 359-amino-acid chain: Acyl-CoA Delta-9 desaturase (359 aa).

A run of 2 helical transmembrane segments spans residues 51 to 71 and 74 to 94; these read VILF…AFTS and IATT…ITGG. His-96, His-101, His-133, His-136, and His-137 together coordinate Fe cation. The Histidine box-1 signature appears at 96–101; that stretch reads HRLWAH. Residues 133-137 carry the Histidine box-2 motif; sequence HRVHH. 2 consecutive transmembrane segments (helical) span residues 194–214 and 222–244; these read YLIL…VYMW and WFVA…NSAA. Residues His-245, His-274, His-277, and His-278 each contribute to the Fe cation site. The Histidine box-3 signature appears at 274-278; that stretch reads HNYHH.

Belongs to the fatty acid desaturase type 1 family. The cofactor is Fe(2+).

The protein resides in the membrane. It carries out the reaction octadecanoyl-CoA + 2 Fe(II)-[cytochrome b5] + O2 + 2 H(+) = (9Z)-octadecenoyl-CoA + 2 Fe(III)-[cytochrome b5] + 2 H2O. It catalyses the reaction hexadecanoyl-CoA + 2 Fe(II)-[cytochrome b5] + O2 + 2 H(+) = (9Z)-hexadecenoyl-CoA + 2 Fe(III)-[cytochrome b5] + 2 H2O. Catalyzes the formation of a Delta9 double bond, acting on saturated fatty acyl substrates like palmitoyl-CoA (hexadecanoyl-CoA) and stearoyl-CoA (octadecanoyl-CoA) with higher desaturation activity on octadecanoyl-CoA than hexadecanoyl-CoA. The protein is Acyl-CoA Delta-9 desaturase of Acheta domesticus (House cricket).